We begin with the raw amino-acid sequence, 319 residues long: MTTKQTVSLFIWLPESKQKTLFISTKNHTQFELNNIIFDVTLSTELPDKEPNAIITKRTHPVGKMADEMRKYEKDHPKVLFLESSAIHDMMSSREEINALLIKNNIPIPNSFSVKSKEEVIQLLQSKQLILPFIVKPENAQGTFNAHQMKIVLEQEGIDDIHFPCLCQHYINHNNKIVKVFCIGNTLKWQTRTSLPNVHRCGIKSVDFNNQHLEDILSWPEGVIDKQDIIENSANRFGSKILEDPILLNLTSEAEMRDLAYKVRCALGVQLCGIDFIKENEQGNPLVVDVNVFPSYGGKVDFDWFVEKVALCYTEVAKI.

Positions 17 and 57 each coordinate 1D-myo-inositol 1,3,4,6-tetrakisphosphate. 1D-myo-inositol 1,3,4-trisphosphate is bound at residue Lys17. ADP is bound by residues Arg94 and Lys136. Positions 94 and 136 each coordinate ATP. In terms of domain architecture, ATP-grasp spans 98–317; the sequence is NALLIKNNIP…KVALCYTEVA (220 aa). 3 residues coordinate 1D-myo-inositol 1,3,4,6-tetrakisphosphate: Gln141, Gly142, and His147. 1D-myo-inositol 1,3,4-trisphosphate contacts are provided by Gln141, Gly142, and His147. Positions 147, 168, 169, 170, and 171 each coordinate ADP. His147, Gln168, His169, Tyr170, and Ile171 together coordinate ATP. A 1D-myo-inositol 1,3,4,6-tetrakisphosphate-binding site is contributed by Lys179. ADP contacts are provided by Ser194 and Asn210. Position 194 (Ser194) interacts with ATP. Asp275 contributes to the Mg(2+) binding site. Positions 288 and 289 each coordinate ADP. Val288, Asp289, and Asn291 together coordinate ATP. Residues Asp289, Asn291, and Ser295 each coordinate 1D-myo-inositol 1,3,4,6-tetrakisphosphate. The Mg(2+) site is built by Asp289 and Asn291. 1D-myo-inositol 1,3,4-trisphosphate contacts are provided by Asn291 and Ser295.

This sequence belongs to the ITPK1 family. As to quaternary structure, monomer. Mg(2+) is required as a cofactor.

It carries out the reaction 1D-myo-inositol 3,4,5,6-tetrakisphosphate + ATP = 1D-myo-inositol 1,3,4,5,6-pentakisphosphate + ADP + H(+). The enzyme catalyses 1D-myo-inositol 1,3,4-trisphosphate + ATP = 1D-myo-inositol 1,3,4,5-tetrakisphosphate + ADP + H(+). The catalysed reaction is 1D-myo-inositol 1,3,4-trisphosphate + ATP = 1D-myo-inositol 1,3,4,6-tetrakisphosphate + ADP + H(+). Its function is as follows. Kinase that can phosphorylate various inositol polyphosphate such as Ins(3,4,5,6)P4 or Ins(1,3,4)P3. Phosphorylates Ins(3,4,5,6)P4 at position 1 to form Ins(1,3,4,5,6)P5. This reaction is thought to have regulatory importance, since Ins(3,4,5,6)P4 is an inhibitor of plasma membrane Ca(2+)-activated Cl(-) channels, while Ins(1,3,4,5,6)P5 is not. Also phosphorylates Ins(1,3,4)P3 on O-5 and O-6 to form Ins(1,3,4,6)P4, an essential molecule in the hexakisphosphate (InsP6) pathway. May also act as an isomerase that interconverts the inositol tetrakisphosphate isomers Ins(1,3,4,5)P4 and Ins(1,3,4,6)P4 in the presence of ADP and magnesium. The chain is Inositol-tetrakisphosphate 1-kinase (ITPK1) from Entamoeba histolytica (strain ATCC 30459 / HM-1:IMSS / ABRM).